A 238-amino-acid chain; its full sequence is MVLLLLVAIPLLVHSSRGPAHYEMLGRCRMVCDPHGPRGPGPDGAPASVPPFPPGAKGEVGRRGKAGLRGPPGPPGPRGPPGEPGRPGPPGPPGPGPGGVAPAAGYVPRIAFYAGLRRPHEGYEVLRFDDVVTNVGNAYEAASGKFTCPMPGVYFFAYHVLMRGGDGTSMWADLMKNGQVRASAIAQDADQNYDYASNSVILHLDVGDEVFIKLDGGKVHGGNTNKYSTFSGFIIYPD.

The N-terminal stretch at 1–15 (MVLLLLVAIPLLVHS) is a signal peptide. The interval 36–101 (GPRGPGPDGA…PPGPGPGGVA (66 aa)) is disordered. Residues 53–96 (PPGAKGEVGRRGKAGLRGPPGPPGPRGPPGEPGRPGPPGPPGPG) enclose the Collagen-like domain. Positions 71-96 (PPGPPGPRGPPGEPGRPGPPGPPGPG) are enriched in pro residues. Positions 105 to 238 (GYVPRIAFYA…TFSGFIIYPD (134 aa)) constitute a C1q domain.

As to quaternary structure, forms homooligomers, predominantly dimers or trimers. Forms heterooligomers with C1QL1, C1QL2 and C1QL3, when proteins are coexpressed; this interaction does not occur after secretion. Interacts with ADGRB3. As to expression, highest expression levels in testis and adipose tissue, lower levels in skeletal muscle and kidney.

It is found in the secreted. Functionally, may regulate the number of excitatory synapses that are formed on hippocampus neurons. Has no effect on inhibitory synapses. May inhibit adipocyte differentiation at an early stage of the process. This is Complement C1q-like protein 4 (C1QL4) from Homo sapiens (Human).